A 960-amino-acid chain; its full sequence is Leucine-rich repeat receptor-like serine/threonine-protein kinase SKM1 (960 aa).

A signal peptide spans 1–29; sequence MSTSHHHHHPPYLITTLFFLFLNFSCLHA. Residues 30–634 lie on the Extracellular side of the membrane; it reads NELELLLSFK…VRKRSTKSWW (605 aa). A disulfide bridge links cysteine 61 with cysteine 68. 6 N-linked (GlcNAc...) asparagine glycosylation sites follow: asparagine 70, asparagine 83, asparagine 103, asparagine 108, asparagine 129, and asparagine 134. 22 LRR repeats span residues 71-96, 97-120, 122-146, 149-168, 169-194, 196-216, 217-240, 241-264, 265-288, 290-312, 313-336, 338-360, 361-384, 386-408, 409-432, 434-454, 455-477, 478-501, 503-525, 526-549, 550-573, and 575-598; these read ISRV…TFRL, PFLQ…IFTT, SPSL…FLPN, TLDL…IGVF, SNLR…NLSR, EFLT…LGKM, KNLK…IGGL, SSLN…LGDL, KKLE…IFSL, NLIS…VAQM, QSLE…VTSL, RLKV…LGKH, NNLT…LCDS, HLTK…LGMC, QSLE…FTKL, LVNF…TWDM, PQLE…FSRS, KRLK…LMTF, EIMD…LSSC, KNLV…FAEF, QVLS…LGNI, and SLVQ…AFLA. Asparagine 191 carries an N-linked (GlcNAc...) asparagine glycan. Positions 221–226 match the CLE45 peptide binding motif; it reads WIYLGY. 2 N-linked (GlcNAc...) asparagine glycosylation sites follow: asparagine 228 and asparagine 252. Residue asparagine 324 is glycosylated (N-linked (GlcNAc...) asparagine). Asparagine 362 and asparagine 372 each carry an N-linked (GlcNAc...) asparagine glycan. Residue asparagine 537 is glycosylated (N-linked (GlcNAc...) asparagine). N-linked (GlcNAc...) asparagine glycans are attached at residues asparagine 580 and asparagine 600. Residues 635–655 form a helical membrane-spanning segment; that stretch reads LIITSTFAAFLAVLVSGFFIV. At 656–960 the chain is on the cytoplasmic side; the sequence is LVFQRTHNVL…TYLSKILSLA (305 aa). The Protein kinase domain maps to 691–953; that stretch reads FTVNTILSSL…SSSSSCTTYL (263 aa). At threonine 692 the chain carries Phosphothreonine. ATP contacts are provided by residues 697–705 and lysine 717; that span reads LSSLKDQNV. Tyrosine 834 is subject to Phosphotyrosine.

Belongs to the protein kinase superfamily. Ser/Thr protein kinase family. In terms of assembly, self-interacts. Binds to CLE45 present in the pistil, particularly under relatively high temperature (at 30 degrees Celsius). Expressed in pollen grains and roots vascular tissues. Present in roots.

Its subcellular location is the cell membrane. It catalyses the reaction L-seryl-[protein] + ATP = O-phospho-L-seryl-[protein] + ADP + H(+). The catalysed reaction is L-threonyl-[protein] + ATP = O-phospho-L-threonyl-[protein] + ADP + H(+). Its function is as follows. Receptor with a serine/threonine-protein kinase activity. Together with SKM2, LRR-rich receptor-like kinase (LRR-RLK) required for male fertility by the perception of CLE43 and CLE45 peptides and the transduction of their promoting action in pollen tubes, especially under relatively high temperature (at 30 degrees Celsius), thus conferring tolerance against high temperature probably through the maintenance of mitochondrial activity. Seems to not be involved in the perception of CLE45 peptide in roots. This is Leucine-rich repeat receptor-like serine/threonine-protein kinase SKM1 from Arabidopsis thaliana (Mouse-ear cress).